Reading from the N-terminus, the 468-residue chain is MDKFNPKKEKTVKKRALKVLTEISPTPLFSMLFLLHISQIATYLSLSDKETLNITVKTKQGGTDTCAGRYVYMHNLPSRFNEDLIKSCEAYIELRNKCKYLINSGFGPRILEEDHNHTTRVLTIETGSWYYTNQFMLEVIFREKMRHYECLTNDSSLSSVVFVPFYAGFDVRRFWGYNVKLRDELGEDLAQWLRERPEWRKMYGRDHFFVTGRVGRDFRRVTDQDSDWGNKLMRLPEFENITMLSIETNSRSNEFAVPYPTYFHPKSRTEVKRWQRQVTMMQRRYLFSFVGANRPKMEESIRGEIIRQCLASQGRCKFLDCDTSSKDCSDPVKVVEVFQDSVFCLQPPGDTPTRRSTFDSILAGCIPVFFSVDSVYNQYKWYFPKDRTKYSVYIAEEGVKKGKVSIEKLLANVSEEKISRMRNEVEKIIPKIIYTKPGEVGPEKIEDAFEIAVARVLERVSLFKMTRI.

The Cytoplasmic portion of the chain corresponds to 1–18 (MDKFNPKKEKTVKKRALK). A helical; Signal-anchor for type II membrane protein transmembrane segment spans residues 19-35 (VLTEISPTPLFSMLFLL). The Lumenal segment spans residues 36–468 (HISQIATYLS…RVSLFKMTRI (433 aa)). N-linked (GlcNAc...) asparagine glycosylation is found at N53, N116, N153, N240, and N412.

The protein belongs to the glycosyltransferase 47 family. In terms of tissue distribution, expressed in roots, hypocotyls, cotyledons, leaves, stems, petals and carpels.

It is found in the golgi apparatus membrane. In terms of biological role, functions in xyloglucan synthesis by adding side chains to the xylosylated glucan backbone. Involved in the galactosylation of hemicellulose xyloglucan. This is Probable xyloglucan galactosyltransferase GT13 from Arabidopsis thaliana (Mouse-ear cress).